Here is a 119-residue protein sequence, read N- to C-terminus: Protein yippee-like 3 (119 aa).

Positions Arg19–Asn116 constitute a Yippee domain. Zn(2+)-binding residues include Cys23, Cys26, Cys79, and Cys82.

Belongs to the yippee family.

Its subcellular location is the nucleus. It is found in the nucleolus. May be involved in proliferation and apoptosis in myeloid precursor cells. This chain is Protein yippee-like 3 (ypel3), found in Danio rerio (Zebrafish).